The chain runs to 677 residues: MTQVAKKILVTCALPYANGSIHLGHMLEHIQADVWVRYQRMRGHEVNFICADDAHGTPIMLKAQQLGITPEQMIGEMSQEHQTDFAGFNISYDNYHSTHSEENRQLSELIYSRLKENGFIKNRTISQLYDPEKGMFLPDRFVKGTCPKCKSPDQYGDNCEVCGATYSPTELIEPKSVVSGATPVMRDSEHFFFDLPSFSEMLQAWTRSGALQEQVANKMQEWFESGLQQWDISRDAPYFGFEIPNAPGKYFYVWLDAPIGYMGSFKNLCDKRGDSVSFDEYWKKDSTAELYHFIGKDIVYFHSLFWPAMLEGSNFRKPTNLFVHGYVTVNGAKMSKSRGTFIKASTWLNHFDADSLRYYYTAKLSSRIDDIDLNLEDFVQRVNADIVNKVVNLASRNAGFINKRFDGVLASELADPQLYRTFTDAAEVIGEAWESREFGKAVREIMALADLANRYVDEQAPWVVAKQEGRDADLQAICSMGINLFRVLMTYLKPVLPKLTERAEAFLNTELTWDGIQQPLLDHKVNPFKALYNRIDMKQVEALVEASKEEVKAAAAPVTGPLADDPIQETITFDDFAKVDLRVALIENAEFVEGSDKLLRLTLDLGGEKRNVFSGIRSAYPDPQALIGRHTIMVANLAPRKMRFGISEGMVMAAGPGGKDIFLLSPDAGAKPGHQVK.

Positions 15 to 25 match the 'HIGH' region motif; the sequence is PYANGSIHLGH. Positions 146, 149, 159, and 162 each coordinate Zn(2+). A 'KMSKS' region motif is present at residues 333–337; it reads KMSKS. Lys336 serves as a coordination point for ATP. In terms of domain architecture, tRNA-binding spans 575 to 677; sequence DFAKVDLRVA…AGAKPGHQVK (103 aa).

The protein belongs to the class-I aminoacyl-tRNA synthetase family. MetG type 1 subfamily. In terms of assembly, homodimer. Zn(2+) is required as a cofactor.

It is found in the cytoplasm. The catalysed reaction is tRNA(Met) + L-methionine + ATP = L-methionyl-tRNA(Met) + AMP + diphosphate. Is required not only for elongation of protein synthesis but also for the initiation of all mRNA translation through initiator tRNA(fMet) aminoacylation. This Shigella boydii serotype 18 (strain CDC 3083-94 / BS512) protein is Methionine--tRNA ligase.